A 353-amino-acid polypeptide reads, in one-letter code: 3-dehydroquinate synthase (353 aa).

Belongs to the archaeal-type DHQ synthase family.

The catalysed reaction is 2-amino-2,3,7-trideoxy-D-lyxo-hept-6-ulosonate + NAD(+) + H2O = 3-dehydroquinate + NH4(+) + NADH + H(+). In terms of biological role, catalyzes the oxidative deamination and cyclization of 2-amino-3,7-dideoxy-D-threo-hept-6-ulosonic acid (ADH) to yield 3-dehydroquinate (DHQ), which is fed into the canonical shikimic pathway of aromatic amino acid biosynthesis. The polypeptide is 3-dehydroquinate synthase (Nitrosopumilus maritimus (strain SCM1)).